The chain runs to 545 residues: CTP synthase (545 aa).

The amidoligase domain stretch occupies residues 1-266 (MTTNYIFVTG…DDLVCARFGI (266 aa)). CTP is bound at residue Ser14. Ser14 serves as a coordination point for UTP. ATP is bound by residues 15-20 (SLGKGI) and Asp72. Residues Asp72 and Glu140 each contribute to the Mg(2+) site. CTP-binding positions include 147–149 (DIE), 187–192 (KTKPTQ), and Lys223. Residues 187–192 (KTKPTQ) and Lys223 contribute to the UTP site. Residue 239–241 (KDV) coordinates ATP. In terms of domain architecture, Glutamine amidotransferase type-1 spans 291 to 542 (TIGMVGKYTE…VKAAGQFQRG (252 aa)). L-glutamine is bound at residue Gly352. The Nucleophile; for glutamine hydrolysis role is filled by Cys379. L-glutamine contacts are provided by residues 380–383 (LGMQ), Glu403, and Arg470. Residues His515 and Glu517 contribute to the active site.

It belongs to the CTP synthase family. Homotetramer.

It carries out the reaction UTP + L-glutamine + ATP + H2O = CTP + L-glutamate + ADP + phosphate + 2 H(+). The catalysed reaction is L-glutamine + H2O = L-glutamate + NH4(+). The enzyme catalyses UTP + NH4(+) + ATP = CTP + ADP + phosphate + 2 H(+). It functions in the pathway pyrimidine metabolism; CTP biosynthesis via de novo pathway; CTP from UDP: step 2/2. Its activity is regulated as follows. Allosterically activated by GTP, when glutamine is the substrate; GTP has no effect on the reaction when ammonia is the substrate. The allosteric effector GTP functions by stabilizing the protein conformation that binds the tetrahedral intermediate(s) formed during glutamine hydrolysis. Inhibited by the product CTP, via allosteric rather than competitive inhibition. Its function is as follows. Catalyzes the ATP-dependent amination of UTP to CTP with either L-glutamine or ammonia as the source of nitrogen. Regulates intracellular CTP levels through interactions with the four ribonucleotide triphosphates. The protein is CTP synthase of Vibrio cholerae serotype O1 (strain ATCC 39541 / Classical Ogawa 395 / O395).